A 342-amino-acid chain; its full sequence is Glycerol-3-phosphate dehydrogenase [NAD(P)+] (342 aa).

NADPH-binding residues include tryptophan 11, arginine 33, and lysine 107. 3 residues coordinate sn-glycerol 3-phosphate: lysine 107, glycine 143, and serine 145. Alanine 147 contributes to the NADPH binding site. 5 residues coordinate sn-glycerol 3-phosphate: lysine 198, aspartate 251, serine 261, arginine 262, and asparagine 263. Residue lysine 198 is the Proton acceptor of the active site. NADPH is bound at residue arginine 262. NADPH is bound by residues valine 286 and glutamate 288.

The protein belongs to the NAD-dependent glycerol-3-phosphate dehydrogenase family.

Its subcellular location is the cytoplasm. The catalysed reaction is sn-glycerol 3-phosphate + NAD(+) = dihydroxyacetone phosphate + NADH + H(+). The enzyme catalyses sn-glycerol 3-phosphate + NADP(+) = dihydroxyacetone phosphate + NADPH + H(+). It participates in membrane lipid metabolism; glycerophospholipid metabolism. Its function is as follows. Catalyzes the reduction of the glycolytic intermediate dihydroxyacetone phosphate (DHAP) to sn-glycerol 3-phosphate (G3P), the key precursor for phospholipid synthesis. This Paracidovorax citrulli (strain AAC00-1) (Acidovorax citrulli) protein is Glycerol-3-phosphate dehydrogenase [NAD(P)+].